A 1722-amino-acid polypeptide reads, in one-letter code: Leucine-rich repeat- and IQ domain-containing protein 1 (1722 aa).

Disordered regions lie at residues 23 to 47 (SLEK…TDSV), 182 to 202 (EDKE…QFQE), 265 to 285 (RTRF…QQNN), and 319 to 367 (QEWK…YEEK). Over residues 38-47 (QSDDSDTDSV) the composition is skewed to acidic residues. The segment covering 265 to 278 (RTRFKDQQEKEKNS) has biased composition (basic and acidic residues). The region spanning 283 to 312 (QNNAAVKIQAKYKAFVAYQKYGPIIKEQIE) is the IQ 1 domain. LRR repeat units lie at residues 819–840 (NLQF…SNCK), 841–861 (KLKY…ENLE), 862–883 (NLCV…DGCT), 884–905 (NIQC…FFLE), 970–991 (NLQQ…CDTP), 992–1013 (TIVY…ENCG), 1014–1035 (LLQI…ENLV), 1036–1057 (LLRE…SSYW), 1060–1081 (LLQN…FHFV), and 1082–1103 (SLEK…IKWF). Positions 1117-1157 (NPLLQETNWRDSLLKVLPALRILNGNILNSNSESRTEEHNQ) constitute an LRRCT domain. 2 IQ domains span residues 1335-1364 (KIMA…LHTA) and 1395-1424 (REKA…AIKN). Residues 1506–1524 (SEHTQFNSRSENKTSSWTP) show a composition bias toward polar residues. Residues 1506-1534 (SEHTQFNSRSENKTSSWTPESKTSRKSLL) form a disordered region.

The chain is Leucine-rich repeat- and IQ domain-containing protein 1 (LRRIQ1) from Homo sapiens (Human).